Reading from the N-terminus, the 295-residue chain is Protoheme IX farnesyltransferase 2 (295 aa).

The next 9 helical transmembrane spans lie at 9 to 29 (ITKP…FFLA), 36 to 56 (FALF…GCVF), 83 to 103 (LTLA…LLYV), 108 to 128 (LAAF…SLWL), 135 to 155 (GTLV…CAVS), 163 to 183 (VTLL…IAIF), 209 to 229 (IVLY…GGYA), 230 to 250 (GLGY…MAWG), and 264 to 284 (VFGF…VDSQ).

This sequence belongs to the UbiA prenyltransferase family. Protoheme IX farnesyltransferase subfamily.

It is found in the cell inner membrane. The enzyme catalyses heme b + (2E,6E)-farnesyl diphosphate + H2O = Fe(II)-heme o + diphosphate. The protein operates within porphyrin-containing compound metabolism; heme O biosynthesis; heme O from protoheme: step 1/1. Its function is as follows. Converts heme B (protoheme IX) to heme O by substitution of the vinyl group on carbon 2 of heme B porphyrin ring with a hydroxyethyl farnesyl side group. The sequence is that of Protoheme IX farnesyltransferase 2 from Pseudomonas entomophila (strain L48).